We begin with the raw amino-acid sequence, 136 residues long: Succinate dehydrogenase assembly factor 3, mitochondrial (136 aa).

The transit peptide at 1-24 directs the protein to the mitochondrion; the sequence is MRASMVRRMAAAASSSASSSLRPA.

It belongs to the complex I LYR family. SDHAF3 subfamily. As to quaternary structure, interacts with the iron-sulfur protein subunit within the SDH catalytic dimer.

The protein resides in the mitochondrion matrix. Plays an essential role in the assembly of succinate dehydrogenase (SDH), an enzyme complex (also referred to as respiratory complex II) that is a component of both the tricarboxylic acid (TCA) cycle and the mitochondrial electron transport chain, and which couples the oxidation of succinate to fumarate with the reduction of ubiquinone (coenzyme Q) to ubiquinol. Promotes maturation of the iron-sulfur protein subunit of the SDH catalytic dimer, protecting it from the deleterious effects of oxidants. May act together with SDHAF1. The chain is Succinate dehydrogenase assembly factor 3, mitochondrial from Pyricularia oryzae (strain 70-15 / ATCC MYA-4617 / FGSC 8958) (Rice blast fungus).